The chain runs to 187 residues: Fibroblast growth factor 4A (187 aa).

Positions 1-22 (MTVPSALVPILLLGTAAVMVQC) are cleaved as a signal peptide.

Belongs to the heparin-binding growth factors family.

It localises to the secreted. Functionally, plays an important role in the regulation of embryonic development, cell proliferation, and cell differentiation. Good candidate for an inducing factor with possible roles both in mesoderm induction at the blastula stage and in the formation of the anteroposterior axis at the gastrula stage. This chain is Fibroblast growth factor 4A (fgf4-a), found in Xenopus laevis (African clawed frog).